Here is a 312-residue protein sequence, read N- to C-terminus: Acetyl-coenzyme A carboxylase carboxyl transferase subunit alpha (312 aa).

The CoA carboxyltransferase C-terminal domain maps to 36-286; it reads RLDKEVKSIY…KEYFLDALRT (251 aa).

This sequence belongs to the AccA family. Acetyl-CoA carboxylase is a heterohexamer composed of biotin carboxyl carrier protein (AccB), biotin carboxylase (AccC) and two subunits each of ACCase subunit alpha (AccA) and ACCase subunit beta (AccD).

Its subcellular location is the cytoplasm. The enzyme catalyses N(6)-carboxybiotinyl-L-lysyl-[protein] + acetyl-CoA = N(6)-biotinyl-L-lysyl-[protein] + malonyl-CoA. It functions in the pathway lipid metabolism; malonyl-CoA biosynthesis; malonyl-CoA from acetyl-CoA: step 1/1. In terms of biological role, component of the acetyl coenzyme A carboxylase (ACC) complex. First, biotin carboxylase catalyzes the carboxylation of biotin on its carrier protein (BCCP) and then the CO(2) group is transferred by the carboxyltransferase to acetyl-CoA to form malonyl-CoA. The polypeptide is Acetyl-coenzyme A carboxylase carboxyl transferase subunit alpha (Helicobacter pylori (strain G27)).